The chain runs to 89 residues: Small ribosomal subunit protein uS15 (89 aa).

This sequence belongs to the universal ribosomal protein uS15 family. Part of the 30S ribosomal subunit. Forms a bridge to the 50S subunit in the 70S ribosome, contacting the 23S rRNA.

In terms of biological role, one of the primary rRNA binding proteins, it binds directly to 16S rRNA where it helps nucleate assembly of the platform of the 30S subunit by binding and bridging several RNA helices of the 16S rRNA. Its function is as follows. Forms an intersubunit bridge (bridge B4) with the 23S rRNA of the 50S subunit in the ribosome. In Mycobacterium avium (strain 104), this protein is Small ribosomal subunit protein uS15.